The sequence spans 198 residues: Elongation factor Ts (198 aa).

Positions 81 to 84 are involved in Mg(2+) ion dislocation from EF-Tu; the sequence is TDFV.

Belongs to the EF-Ts family.

The protein resides in the cytoplasm. In terms of biological role, associates with the EF-Tu.GDP complex and induces the exchange of GDP to GTP. It remains bound to the aminoacyl-tRNA.EF-Tu.GTP complex up to the GTP hydrolysis stage on the ribosome. The chain is Elongation factor Ts from Pseudothermotoga lettingae (strain ATCC BAA-301 / DSM 14385 / NBRC 107922 / TMO) (Thermotoga lettingae).